The sequence spans 1300 residues: Insulin receptor-related protein (1300 aa).

The signal sequence occupies residues 1 to 26; it reads MAVPALWPWGVHLLMSLLSLGSGLDT. 2 N-linked (GlcNAc...) asparagine glycosylation sites follow: Asn-47 and Asn-100. Disulfide bonds link Cys-214-Cys-222, Cys-216-Cys-228, Cys-229-Cys-237, Cys-233-Cys-246, Cys-249-Cys-258, Cys-262-Cys-274, Cys-280-Cys-300, Cys-304-Cys-317, and Cys-320-Cys-324. The N-linked (GlcNAc...) asparagine glycan is linked to Asn-311. Asn-411, Asn-492, Asn-528, Asn-616, Asn-634, Asn-756, Asn-885, and Asn-898 each carry an N-linked (GlcNAc...) asparagine glycan. Fibronectin type-III domains are found at residues 483 to 603 and 607 to 707; these read QTRT…TLPA and VPQD…AQEV. Cys-657 and Cys-864 are disulfide-bonded. At 747–921 the chain is on the extracellular side; sequence EAGLLRLGKN…LEEEDTGGMR (175 aa). The region spanning 818–913 is the Fibronectin type-III 3 domain; sequence IPGKVAWKAA…GVTFYITDLE (96 aa). A helical membrane pass occupies residues 922–943; sequence IFLTVTPVGFMLLVTLAALGFF. Topologically, residues 944 to 1300 are cytoplasmic; it reads YSRKRNSTLY…YSAPNGGPGH (357 aa). In terms of domain architecture, Protein kinase spans 979–1254; that stretch reads IAIIRELGQG…RIQDELRPSF (276 aa). ATP-binding positions include 985–993 and Lys-1013; that span reads LGQGSFGMV. The active-site Proton acceptor is the Asp-1115. Tyr-1145 and Tyr-1146 each carry phosphotyrosine; by autocatalysis. Positions 1273–1300 are disordered; it reads LPTEAEPDSPPTLNGASDYSAPNGGPGH.

It belongs to the protein kinase superfamily. Tyr protein kinase family. Insulin receptor subfamily. Probable tetramer of 2 alpha and 2 beta chains linked by disulfide bonds. The alpha chains contribute to the formation of the ligand-binding domain, while the beta chains carry the kinase domain. Autophosphorylated on tyrosine residues between pH 7.9 and pH 10.5. In terms of tissue distribution, highly expressed in the islets as well as in pancreatic beta-cells.

The protein localises to the membrane. It catalyses the reaction L-tyrosyl-[protein] + ATP = O-phospho-L-tyrosyl-[protein] + ADP + H(+). Its function is as follows. Receptor with tyrosine-protein kinase activity. Functions as a pH sensing receptor which is activated by increased extracellular pH. Activates an intracellular signaling pathway that involves IRS1 and AKT1/PKB. The chain is Insulin receptor-related protein (Insrr) from Mus musculus (Mouse).